Reading from the N-terminus, the 114-residue chain is Large ribosomal subunit protein uL22 (114 aa).

The protein belongs to the universal ribosomal protein uL22 family. As to quaternary structure, part of the 50S ribosomal subunit.

Functionally, this protein binds specifically to 23S rRNA; its binding is stimulated by other ribosomal proteins, e.g. L4, L17, and L20. It is important during the early stages of 50S assembly. It makes multiple contacts with different domains of the 23S rRNA in the assembled 50S subunit and ribosome. Its function is as follows. The globular domain of the protein is located near the polypeptide exit tunnel on the outside of the subunit, while an extended beta-hairpin is found that lines the wall of the exit tunnel in the center of the 70S ribosome. The protein is Large ribosomal subunit protein uL22 of Streptococcus thermophilus (strain CNRZ 1066).